Reading from the N-terminus, the 363-residue chain is Mannose-1-phosphate guanyltransferase (363 aa).

It belongs to the transferase hexapeptide repeat family.

The protein localises to the cytoplasm. It carries out the reaction alpha-D-mannose 1-phosphate + GTP + H(+) = GDP-alpha-D-mannose + diphosphate. Its pathway is nucleotide-sugar biosynthesis; GDP-alpha-D-mannose biosynthesis; GDP-alpha-D-mannose from alpha-D-mannose 1-phosphate (GTP route): step 1/1. Involved in cell wall synthesis where it is required for glycosylation. Involved in cell cycle progression through cell-size checkpoint. Required for the correct assembly of the septum. In Schizosaccharomyces pombe (strain 972 / ATCC 24843) (Fission yeast), this protein is Mannose-1-phosphate guanyltransferase (mpg1).